Here is a 75-residue protein sequence, read N- to C-terminus: Large ribosomal subunit protein bL28 (75 aa).

The protein belongs to the bacterial ribosomal protein bL28 family.

The sequence is that of Large ribosomal subunit protein bL28 from Buchnera aphidicola subsp. Acyrthosiphon pisum (strain 5A).